Reading from the N-terminus, the 123-residue chain is UPF0738 protein BCE_1319 (123 aa).

This sequence belongs to the UPF0738 family.

The polypeptide is UPF0738 protein BCE_1319 (Bacillus cereus (strain ATCC 10987 / NRS 248)).